A 214-amino-acid polypeptide reads, in one-letter code: Probable nicotinate-nucleotide adenylyltransferase (214 aa).

Belongs to the NadD family.

It carries out the reaction nicotinate beta-D-ribonucleotide + ATP + H(+) = deamido-NAD(+) + diphosphate. It participates in cofactor biosynthesis; NAD(+) biosynthesis; deamido-NAD(+) from nicotinate D-ribonucleotide: step 1/1. Its function is as follows. Catalyzes the reversible adenylation of nicotinate mononucleotide (NaMN) to nicotinic acid adenine dinucleotide (NaAD). The protein is Probable nicotinate-nucleotide adenylyltransferase of Mycolicibacterium vanbaalenii (strain DSM 7251 / JCM 13017 / BCRC 16820 / KCTC 9966 / NRRL B-24157 / PYR-1) (Mycobacterium vanbaalenii).